The following is a 147-amino-acid chain: UPF0306 protein YhbP (147 aa).

This sequence belongs to the UPF0306 family.

The sequence is that of UPF0306 protein YhbP from Salmonella choleraesuis (strain SC-B67).